Reading from the N-terminus, the 143-residue chain is MEYANLHYVKESSNLERSSTYKSSKIQDEAKQLLYDYVYIKEKLLTTSSNSLTHYQWYLIYKHTCRCFQQVVRIVYWFLGNQVIRENFSIKKRKPHNHIPQLLEQCTCIAESFEGIYTKKQILYFKCYGTFKTWKKIANFPHL.

Functionally, has a role in meiosis. The chain is Meiotically up-regulated gene 128 protein (mug128) from Schizosaccharomyces pombe (strain 972 / ATCC 24843) (Fission yeast).